We begin with the raw amino-acid sequence, 380 residues long: Kappa-type opioid receptor (380 aa).

The Extracellular portion of the chain corresponds to 1 to 57 (MDSPIQIFRGEPGPTCAPSACLPPNSSAWFPGWAEPDSNGSAGSEDAQLEPAHISPA). Residues asparagine 25 and asparagine 39 are each glycosylated (N-linked (GlcNAc...) asparagine). A helical membrane pass occupies residues 58-85 (IPVIITAVYSVVFVVGLVGNSLVMFVII). The Cytoplasmic segment spans residues 86–95 (RYTKMKTATN). The chain crosses the membrane as a helical span at residues 96–119 (IYIFNLALADALVTTTMPFQSTVY). Over 120-132 (LMNSWPFGDVLCK) the chain is Extracellular. Cysteine 131 and cysteine 210 are oxidised to a cystine. A helical transmembrane segment spans residues 133 to 154 (IVISIDYYNMFTSIFTLTMMSV). Residues 155–173 (DRYIAVCHPVKALDFRTPL) are Cytoplasmic-facing. Residues 174–196 (KAKIINICIWLLSSSVGISAIVL) traverse the membrane as a helical segment. Topologically, residues 197–222 (GGTKVREDVDVIECSLQFPDDDYSWW) are extracellular. Residues 223-247 (DLFMKICVFIFAFVIPVLIIIVCYT) form a helical membrane-spanning segment. Residues 248–274 (LMILRLKSVRLLSGSREKDRNLRRITR) are Cytoplasmic-facing. The helical transmembrane segment at 275-296 (LVLVVVAVFVVCWTPIHIFILV) threads the bilayer. Over 297-311 (EALGSTSHSTAALSS) the chain is Extracellular. The helical transmembrane segment at 312–333 (YYFCIALGYTNSSLNPILYAFL) threads the bilayer. Over 334-380 (DENFKRCFRDFCFPLKMRMERQSTSRVRNTVQDPAYLRDIDGMNKPV) the chain is Cytoplasmic. A lipid anchor (S-palmitoyl cysteine) is attached at cysteine 345.

It belongs to the G-protein coupled receptor 1 family. Interacts with NHERF1. Interacts with GABARAPL1. As to expression, detected in brain and placenta.

Its subcellular location is the cell membrane. Functionally, G-protein coupled opioid receptor that functions as a receptor for endogenous alpha-neoendorphins and dynorphins, but has low affinity for beta-endorphins. Also functions as a receptor for various synthetic opioids and for the psychoactive diterpene salvinorin A. Ligand binding causes a conformation change that triggers signaling via guanine nucleotide-binding proteins (G proteins) and modulates the activity of down-stream effectors, such as adenylate cyclase. Signaling leads to the inhibition of adenylate cyclase activity. Inhibits neurotransmitter release by reducing calcium ion currents and increasing potassium ion conductance. Plays a role in the perception of pain. Plays a role in mediating reduced physical activity upon treatment with synthetic opioids. Plays a role in the regulation of salivation in response to synthetic opioids. May play a role in arousal and regulation of autonomic and neuroendocrine functions. The sequence is that of Kappa-type opioid receptor (OPRK1) from Homo sapiens (Human).